Here is a 232-residue protein sequence, read N- to C-terminus: 2,3,4,5-tetrahydropyridine-2,6-dicarboxylate N-acetyltransferase (232 aa).

Belongs to the transferase hexapeptide repeat family. DapH subfamily.

It carries out the reaction (S)-2,3,4,5-tetrahydrodipicolinate + acetyl-CoA + H2O = L-2-acetamido-6-oxoheptanedioate + CoA. Its pathway is amino-acid biosynthesis; L-lysine biosynthesis via DAP pathway; LL-2,6-diaminopimelate from (S)-tetrahydrodipicolinate (acetylase route): step 1/3. Catalyzes the transfer of an acetyl group from acetyl-CoA to tetrahydrodipicolinate. The chain is 2,3,4,5-tetrahydropyridine-2,6-dicarboxylate N-acetyltransferase from Streptococcus pneumoniae (strain Taiwan19F-14).